Consider the following 293-residue polypeptide: Light-independent protochlorophyllide reductase iron-sulfur ATP-binding protein (293 aa).

Residues 10-15 (GIGKST) and Lys-39 each bind ATP. Ser-14 contacts Mg(2+). [4Fe-4S] cluster is bound by residues Cys-95 and Cys-129. 180-181 (NR) contacts ATP.

This sequence belongs to the NifH/BchL/ChlL family. As to quaternary structure, homodimer. Protochlorophyllide reductase is composed of three subunits; ChlL, ChlN and ChlB. It depends on [4Fe-4S] cluster as a cofactor.

The protein resides in the plastid. Its subcellular location is the chloroplast. The catalysed reaction is chlorophyllide a + oxidized 2[4Fe-4S]-[ferredoxin] + 2 ADP + 2 phosphate = protochlorophyllide a + reduced 2[4Fe-4S]-[ferredoxin] + 2 ATP + 2 H2O. The protein operates within porphyrin-containing compound metabolism; chlorophyll biosynthesis (light-independent). Component of the dark-operative protochlorophyllide reductase (DPOR) that uses Mg-ATP and reduced ferredoxin to reduce ring D of protochlorophyllide (Pchlide) to form chlorophyllide a (Chlide). This reaction is light-independent. The L component serves as a unique electron donor to the NB-component of the complex, and binds Mg-ATP. This Adiantum capillus-veneris (Maidenhair fern) protein is Light-independent protochlorophyllide reductase iron-sulfur ATP-binding protein.